Consider the following 62-residue polypeptide: Sperm protamine P1 (62 aa).

Positions 1–62 are disordered; sequence MARYRRHSRS…RYSRRGRRRY (62 aa).

This sequence belongs to the protamine P1 family. Testis.

It is found in the nucleus. The protein localises to the chromosome. Protamines substitute for histones in the chromatin of sperm during the haploid phase of spermatogenesis. They compact sperm DNA into a highly condensed, stable and inactive complex. The protein is Sperm protamine P1 (PRM1) of Antechinomys laniger (Eastern jerboa marsupial).